A 216-amino-acid polypeptide reads, in one-letter code: Elongation factor Ts (216 aa).

Residues 80–83 (TDFV) form an involved in Mg(2+) ion dislocation from EF-Tu region.

The protein belongs to the EF-Ts family.

The protein resides in the cytoplasm. Its function is as follows. Associates with the EF-Tu.GDP complex and induces the exchange of GDP to GTP. It remains bound to the aminoacyl-tRNA.EF-Tu.GTP complex up to the GTP hydrolysis stage on the ribosome. This chain is Elongation factor Ts, found in Alkaliphilus oremlandii (strain OhILAs) (Clostridium oremlandii (strain OhILAs)).